Consider the following 311-residue polypeptide: Methionyl-tRNA formyltransferase (311 aa).

111 to 114 contributes to the (6S)-5,6,7,8-tetrahydrofolate binding site; that stretch reads SLLP.

It belongs to the Fmt family.

It catalyses the reaction L-methionyl-tRNA(fMet) + (6R)-10-formyltetrahydrofolate = N-formyl-L-methionyl-tRNA(fMet) + (6S)-5,6,7,8-tetrahydrofolate + H(+). Attaches a formyl group to the free amino group of methionyl-tRNA(fMet). The formyl group appears to play a dual role in the initiator identity of N-formylmethionyl-tRNA by promoting its recognition by IF2 and preventing the misappropriation of this tRNA by the elongation apparatus. In Caldicellulosiruptor saccharolyticus (strain ATCC 43494 / DSM 8903 / Tp8T 6331), this protein is Methionyl-tRNA formyltransferase.